The following is a 904-amino-acid chain: Alanine--tRNA ligase (904 aa).

Residues histidine 584, histidine 588, cysteine 687, and histidine 691 each coordinate Zn(2+).

The protein belongs to the class-II aminoacyl-tRNA synthetase family. It depends on Zn(2+) as a cofactor.

It is found in the cytoplasm. It catalyses the reaction tRNA(Ala) + L-alanine + ATP = L-alanyl-tRNA(Ala) + AMP + diphosphate. Its function is as follows. Catalyzes the attachment of alanine to tRNA(Ala) in a two-step reaction: alanine is first activated by ATP to form Ala-AMP and then transferred to the acceptor end of tRNA(Ala). Also edits incorrectly charged Ser-tRNA(Ala) and Gly-tRNA(Ala) via its editing domain. The chain is Alanine--tRNA ligase from Mycobacterium tuberculosis (strain ATCC 25177 / H37Ra).